The following is a 304-amino-acid chain: Glutaminase (304 aa).

Residues Ser63, Asn114, Glu158, Asn165, Tyr189, Tyr240, and Val258 each contribute to the substrate site.

The protein belongs to the glutaminase family. Homotetramer.

The enzyme catalyses L-glutamine + H2O = L-glutamate + NH4(+). The protein is Glutaminase of Shewanella oneidensis (strain ATCC 700550 / JCM 31522 / CIP 106686 / LMG 19005 / NCIMB 14063 / MR-1).